The sequence spans 207 residues: Outer-membrane lipoprotein carrier protein (207 aa).

Residues 1 to 21 (MRAIRMLLVSALTLGSVTAYA) form the signal peptide.

This sequence belongs to the LolA family. Monomer.

The protein resides in the periplasm. Functionally, participates in the translocation of lipoproteins from the inner membrane to the outer membrane. Only forms a complex with a lipoprotein if the residue after the N-terminal Cys is not an aspartate (The Asp acts as a targeting signal to indicate that the lipoprotein should stay in the inner membrane). The sequence is that of Outer-membrane lipoprotein carrier protein from Pseudomonas putida (strain ATCC 47054 / DSM 6125 / CFBP 8728 / NCIMB 11950 / KT2440).